A 365-amino-acid chain; its full sequence is UDP-N-acetylglucosamine--N-acetylmuramyl-(pentapeptide) pyrophosphoryl-undecaprenol N-acetylglucosamine transferase (365 aa).

UDP-N-acetyl-alpha-D-glucosamine is bound by residues 12-14 (TGG), asparagine 123, arginine 166, serine 194, and glutamine 295.

The protein belongs to the glycosyltransferase 28 family. MurG subfamily.

Its subcellular location is the cell inner membrane. It carries out the reaction di-trans,octa-cis-undecaprenyl diphospho-N-acetyl-alpha-D-muramoyl-L-alanyl-D-glutamyl-meso-2,6-diaminopimeloyl-D-alanyl-D-alanine + UDP-N-acetyl-alpha-D-glucosamine = di-trans,octa-cis-undecaprenyl diphospho-[N-acetyl-alpha-D-glucosaminyl-(1-&gt;4)]-N-acetyl-alpha-D-muramoyl-L-alanyl-D-glutamyl-meso-2,6-diaminopimeloyl-D-alanyl-D-alanine + UDP + H(+). It participates in cell wall biogenesis; peptidoglycan biosynthesis. Functionally, cell wall formation. Catalyzes the transfer of a GlcNAc subunit on undecaprenyl-pyrophosphoryl-MurNAc-pentapeptide (lipid intermediate I) to form undecaprenyl-pyrophosphoryl-MurNAc-(pentapeptide)GlcNAc (lipid intermediate II). The polypeptide is UDP-N-acetylglucosamine--N-acetylmuramyl-(pentapeptide) pyrophosphoryl-undecaprenol N-acetylglucosamine transferase (Phenylobacterium zucineum (strain HLK1)).